Reading from the N-terminus, the 48-residue chain is Large ribosomal subunit protein eL40 (48 aa).

The protein belongs to the eukaryotic ribosomal protein eL40 family.

The chain is Large ribosomal subunit protein eL40 from Methanosphaerula palustris (strain ATCC BAA-1556 / DSM 19958 / E1-9c).